The following is a 123-amino-acid chain: uncharacterized protein (123 aa).

Transmembrane regions (helical) follow at residues 7 to 29 (VKHL…FDAV), 44 to 66 (FFIH…VHRI), and 79 to 101 (LGLY…AAMA).

It is found in the cell membrane. This is an uncharacterized protein from Bacillus subtilis (strain 168).